The sequence spans 436 residues: Gamma-glutamyl phosphate reductase (436 aa).

The protein belongs to the gamma-glutamyl phosphate reductase family.

It localises to the cytoplasm. It catalyses the reaction L-glutamate 5-semialdehyde + phosphate + NADP(+) = L-glutamyl 5-phosphate + NADPH + H(+). It participates in amino-acid biosynthesis; L-proline biosynthesis; L-glutamate 5-semialdehyde from L-glutamate: step 2/2. Its function is as follows. Catalyzes the NADPH-dependent reduction of L-glutamate 5-phosphate into L-glutamate 5-semialdehyde and phosphate. The product spontaneously undergoes cyclization to form 1-pyrroline-5-carboxylate. This is Gamma-glutamyl phosphate reductase from Prochlorococcus marinus subsp. pastoris (strain CCMP1986 / NIES-2087 / MED4).